A 236-amino-acid polypeptide reads, in one-letter code: Translocon-associated protein subunit alpha (236 aa).

The signal sequence occupies residues 1-20 (MNKLITLLLAVLMIISCVYS). Topologically, residues 21 to 163 (DDVEITDDEV…TEKETSFDMD (143 aa)) are lumenal. N-linked (GlcNAc...) asparagine glycans are attached at residues Asn74, Asn94, Asn141, Asn148, and Asn152. A helical membrane pass occupies residues 164–184 (SFFLILLGLGFVGGIGYIVYG). The Cytoplasmic segment spans residues 185–236 (KMPKQKKVRTVSKVNKNAVRVETEDETAEWLSGTSAASSKVKSVQKVVKKNK).

It belongs to the TRAP-alpha family. In terms of assembly, heterotrimer of TRAP-alpha, TRAP-beta and TRAP-gamma. Phosphorylated in its cytoplasmic tail.

Its subcellular location is the endoplasmic reticulum membrane. In terms of biological role, TRAP proteins are part of a complex whose function is to bind calcium to the ER membrane and thereby regulate the retention of ER resident proteins. In Dictyostelium discoideum (Social amoeba), this protein is Translocon-associated protein subunit alpha (ssr1).